A 500-amino-acid polypeptide reads, in one-letter code: MSDSSPTINFINFNQTGTCISLGTSKGFKIFNCEPFGKFYSEDSGGYAIVEMLFSTSLLALVGIGDQPALSPRRLRIINTKKHSIICEVTFPTSILSVKMNKSRLVVLLQEQIYIYDINTMRLLHTIETNPNPRGLMAMSPSVANSYLVYPSPPKVINSEIKAHATTNNITLSVGGNTETSFKRDQQDAGHSDISDLDQYSSFTKRDDADPTSSNGGNSSIIKNGDVIVFNLETLQPTMVIEAHKGEIAAMAISFDGTLMATASDKGTIIRVFDIETGDKIYQFRRGTYATRIYSISFSEDSQYLAVTGSSKTVHIFKLGHSMSNNKLDSDDSNMEEAAADDSSLDTTSIDALSDEENPTRLAREPYVDASRKTMGRMIRYSSQKLSRRAARTLGQIFPIKVTSLLESSRHFASLKLPVETNSHVMTISSIGSPIDIDTSEYPELFETGNSASTESYHEPVMKMVPIRVVSSDGYLYNFVMDPERGGDCLILSQYSILMD.

A WD 1 repeat occupies 3 to 41; sequence DSSPTINFINFNQTGTCISLGTSKGFKIFNCEPFGKFYS. The disordered stretch occupies residues 174 to 197; that stretch reads VGGNTETSFKRDQQDAGHSDISDL. A compositionally biased stretch (basic and acidic residues) spans 181 to 194; sequence SFKRDQQDAGHSDI. 2 WD repeats span residues 243-283 and 288-327; these read AHKG…KIYQ and TYAT…SNNK. Positions 284-288 match the L/FRRG motif motif; the sequence is FRRGT. Residues 328 to 358 form a disordered region; the sequence is LDSDDSNMEEAAADDSSLDTTSIDALSDEEN. Positions 331-344 are enriched in acidic residues; sequence DDSNMEEAAADDSS. Ser-354 bears the Phosphoserine mark.

This sequence belongs to the WD repeat PROPPIN family. As to quaternary structure, component of the PI(3,5)P2 regulatory complex, composed of ATG18, FIG4, FAB1, VAC14 and VAC7. VAC14 nucleates the assembly of the complex and serves as a scaffold. Interacts with ATG2, ATG9 and VAC17. The ATG2-ATG18 complex is essential for autophagosome formation.

Its subcellular location is the preautophagosomal structure membrane. The protein localises to the vacuole membrane. It is found in the endosome membrane. Its function is as follows. The PI(3,5)P2 regulatory complex regulates both the synthesis and turnover of phosphatidylinositol 3,5-bisphosphate (PtdIns(3,5)P2). May negatively regulate FAB1 activity by sequestering or masking VAC7 from FAB1. Necessary for proper vacuole morphology. Plays an important role in osmotically-induced vacuole fragmentation. Required for cytoplasm to vacuole transport (Cvt) vesicle formation, pexophagy and starvation-induced autophagy. Involved in correct ATG9 trafficking to the pre-autophagosomal structure. Might also be involved in premeiotic DNA replication. With ATG2, protects ATG8 from ARG4-mediated cleavage. This Saccharomyces cerevisiae (strain YJM789) (Baker's yeast) protein is Autophagy-related protein 18 (ATG18).